The following is a 90-amino-acid chain: DNA-binding protein HU (90 aa).

The disordered stretch occupies residues 57–90 (ARKGVNPQTRKPITIPERKVPKFKPGKALKEKVK).

Belongs to the bacterial histone-like protein family.

Functionally, histone-like DNA-binding protein which is capable of wrapping DNA to stabilize it, and thus to prevent its denaturation under extreme environmental conditions. The polypeptide is DNA-binding protein HU (hup) (Thermotoga maritima (strain ATCC 43589 / DSM 3109 / JCM 10099 / NBRC 100826 / MSB8)).